The primary structure comprises 365 residues: Protein RecA (365 aa).

ATP is bound at residue Gly-69–Thr-76. Residues Leu-344–Glu-365 form a disordered region. The segment covering Asn-347–Glu-365 has biased composition (acidic residues).

It belongs to the RecA family.

The protein resides in the cytoplasm. Its function is as follows. Can catalyze the hydrolysis of ATP in the presence of single-stranded DNA, the ATP-dependent uptake of single-stranded DNA by duplex DNA, and the ATP-dependent hybridization of homologous single-stranded DNAs. It interacts with LexA causing its activation and leading to its autocatalytic cleavage. The chain is Protein RecA from Arthrospira platensis (Spirulina platensis).